Reading from the N-terminus, the 352-residue chain is tRNA (guanine-N(1)-)-methyltransferase (352 aa).

S-adenosyl-L-methionine is bound by residues glycine 109 and 129 to 134 (IGDYVL).

This sequence belongs to the RNA methyltransferase TrmD family. In terms of assembly, homodimer.

It is found in the cytoplasm. It catalyses the reaction guanosine(37) in tRNA + S-adenosyl-L-methionine = N(1)-methylguanosine(37) in tRNA + S-adenosyl-L-homocysteine + H(+). Its function is as follows. Specifically methylates guanosine-37 in various tRNAs. This is tRNA (guanine-N(1)-)-methyltransferase from Chlamydia trachomatis serovar A (strain ATCC VR-571B / DSM 19440 / HAR-13).